A 145-amino-acid polypeptide reads, in one-letter code: Large ribosomal subunit protein uL15 (145 aa).

A disordered region spans residues 1 to 52 (MFNLLKPKGASKRRKIVGRGPGSGLGKTSGRGQKGQKARNTSPRLGFEGGQT). Gly residues predominate over residues 19 to 33 (RGPGSGLGKTSGRGQ).

It belongs to the universal ribosomal protein uL15 family. As to quaternary structure, part of the 50S ribosomal subunit.

Binds to the 23S rRNA. The protein is Large ribosomal subunit protein uL15 of Borreliella burgdorferi (strain ATCC 35210 / DSM 4680 / CIP 102532 / B31) (Borrelia burgdorferi).